The following is a 169-amino-acid chain: Interleukin-2 (169 aa).

Residues 1–20 form the signal peptide; sequence MYSMQLASCVTLTLVLLVNS. O-linked (GalNAc...) threonine glycosylation occurs at Thr-23. Cys-92 and Cys-140 are joined by a disulfide.

This sequence belongs to the IL-2 family. Produced by immune cells including dendritic cells. In contrast, macrophages do not produce IL2 upon bacterial stimulation.

The protein localises to the secreted. In terms of biological role, cytokine produced by activated CD4-positive helper T-cells and to a lesser extend activated CD8-positive T-cells and natural killer (NK) cells that plays pivotal roles in the immune response and tolerance. Binds to a receptor complex composed of either the high-affinity trimeric IL-2R (IL2RA/CD25, IL2RB/CD122 and IL2RG/CD132) or the low-affinity dimeric IL-2R (IL2RB and IL2RG). Interaction with the receptor leads to oligomerization and conformation changes in the IL-2R subunits resulting in downstream signaling starting with phosphorylation of JAK1 and JAK3. In turn, JAK1 and JAK3 phosphorylate the receptor to form a docking site leading to the phosphorylation of several substrates including STAT5. This process leads to activation of several pathways including STAT, phosphoinositide-3-kinase/PI3K and mitogen-activated protein kinase/MAPK pathways. Functions as a T-cell growth factor and can increase NK-cell cytolytic activity as well. Promotes strong proliferation of activated B-cells and subsequently immunoglobulin production. Plays a pivotal role in regulating the adaptive immune system by controlling the survival and proliferation of regulatory T-cells, which are required for the maintenance of immune tolerance. Moreover, participates in the differentiation and homeostasis of effector T-cell subsets, including Th1, Th2, Th17 as well as memory CD8-positive T-cells. This Mus musculus (Mouse) protein is Interleukin-2 (Il2).